A 412-amino-acid chain; its full sequence is Kelch repeat-containing protein At1g19470 (412 aa).

Residues 1-55 form a disordered region; the sequence is MVNISEIPDDSNDGCDPNKKPEEQVLRRSRRIATRNENQNKKPKEEEEEDNRSVS. Basic and acidic residues predominate over residues 16–26; that stretch reads DPNKKPEEQVL. Kelch repeat units follow at residues 156–202, 203–250, 255–291, and 292–345; these read EMYV…VVDG, KIYV…SAHA, KLYMLGSKFCLVYEPKRNGEWDASVGATPLKDLWDKT, and CCVV…EMAN.

The chain is Kelch repeat-containing protein At1g19470 from Arabidopsis thaliana (Mouse-ear cress).